A 404-amino-acid chain; its full sequence is Cysteine desulfurase IscS (404 aa).

Pyridoxal 5'-phosphate contacts are provided by residues Ala75–Thr76, Asn155, Gln183, and Ser203–His205. An N6-(pyridoxal phosphate)lysine modification is found at Lys206. Position 243 (Thr243) interacts with pyridoxal 5'-phosphate. Cys328 serves as the catalytic Cysteine persulfide intermediate. A [2Fe-2S] cluster-binding site is contributed by Cys328.

Belongs to the class-V pyridoxal-phosphate-dependent aminotransferase family. NifS/IscS subfamily. In terms of assembly, homodimer. Forms a heterotetramer with IscU, interacts with other sulfur acceptors. Requires pyridoxal 5'-phosphate as cofactor.

The protein localises to the cytoplasm. It catalyses the reaction (sulfur carrier)-H + L-cysteine = (sulfur carrier)-SH + L-alanine. Its pathway is cofactor biosynthesis; iron-sulfur cluster biosynthesis. In terms of biological role, master enzyme that delivers sulfur to a number of partners involved in Fe-S cluster assembly, tRNA modification or cofactor biosynthesis. Catalyzes the removal of elemental sulfur atoms from cysteine to produce alanine. Functions as a sulfur delivery protein for Fe-S cluster synthesis onto IscU, an Fe-S scaffold assembly protein, as well as other S acceptor proteins. The polypeptide is Cysteine desulfurase IscS (Pseudomonas putida (strain GB-1)).